The sequence spans 204 residues: Ras-related protein R-Ras2 (204 aa).

Ala-2 is subject to N-acetylalanine. 21 to 29 (GGGGVGKSA) is a GTP binding site. An Effector region motif is present at residues 43–51 (YDPTIEDSY). Residues 68–72 (DTAGQ), 127–130 (NKAD), and 157–159 (SAK) each bind GTP. The residue at position 186 (Ser-186) is a Phosphoserine. Residues Lys-192, Lys-194, Lys-196, and Lys-197 are each lipidated (N6-palmitoyl lysine). The S-palmitoyl cysteine moiety is linked to residue Cys-199. Cysteine methyl ester is present on Cys-201. Residue Cys-201 is the site of S-farnesyl cysteine attachment. A propeptide spans 202 to 204 (VIF) (removed in mature form).

This sequence belongs to the small GTPase superfamily. Ras family. As to quaternary structure, interacts with RASSF5. Post-translationally, may be post-translationally modified by both palmitoylation and polyisoprenylation. Fatty-acylation at Lys-192, Lys-194; lys-196 and Lys-197 is required for localization to the plasma membrane and activity. Defatty-acylated by SIRT6, affecting its localization to the plasma membrane. As to expression, ubiquitously present in all tissues examined, with the highest levels in heart, placenta, and skeletal muscle. Moderate levels in lung and liver; low levels in brain, kidney, and pancreas.

The protein resides in the cell membrane. The protein localises to the golgi apparatus membrane. The enzyme catalyses GTP + H2O = GDP + phosphate + H(+). In terms of biological role, GTP-binding protein with GTPase activity, involved in the regulation of MAPK signaling pathway and thereby controlling multiple cellular processes. Regulates craniofacial development. The chain is Ras-related protein R-Ras2 from Homo sapiens (Human).